The following is a 4466-amino-acid chain: Dynein beta chain, ciliary (4466 aa).

Residues 1 to 1813 (MGDVVDARLD…YANICDAQFK (1813 aa)) form a stem region. ATP is bound at residue 154–161 (AGQVKGKT). Coiled coils occupy residues 482 to 502 (QEFLEDYEEFEKKVFDLDRRL), 627 to 643 (QKYEEMLNLLNKYEQKV), 734 to 805 (VLEV…WTKQ), 1036 to 1056 (TLDQFKEQVDTYEKIYSEADE), 1306 to 1337 (WLEINVEQMEMDCKKFAKDIRSLDKEMRAWDA), and 1443 to 1468 (LLKSNEELIETLEDNQVQLQNLMTSK). AAA stretches follow at residues 1814–2035 (YSYE…VLVV), 2095–2316 (KVVK…IRFK), 2422–2669 (ELDP…VFQG), and 2767–3016 (TYNE…ERRY). ATP-binding positions include 1852–1859 (GPAGTGKT), 2133–2140 (GNAGTGKS), 2460–2467 (GNAGLGKS), and 2805–2812 (GVGGSGKQ). Coiled coils occupy residues 3033–3134 (SLLA…AKAE), 3263–3325 (EPKR…SRTI), and 3573–3642 (QERP…EEAK). The stalk stretch occupies residues 3033 to 3325 (SLLAMKSKEL…QEAEATSRTI (293 aa)). AAA stretches follow at residues 3409 to 3636 (LTDD…EISV) and 3846 to 4072 (VRNF…VLYN).

It belongs to the dynein heavy chain family. Consists of at least two heavy chains (alpha and beta), three intermediate chains and several light chains.

It is found in the cell projection. The protein resides in the cilium. It localises to the flagellum. Its subcellular location is the cytoplasm. The protein localises to the cytoskeleton. It is found in the flagellum axoneme. Force generating protein of eukaryotic cilia and flagella. Produces force towards the minus ends of microtubules. Dynein has ATPase activity; the force-producing power stroke is thought to occur on release of ADP. The chain is Dynein beta chain, ciliary from Heliocidaris crassispina (Sea urchin).